The chain runs to 398 residues: Phosphoglycerate kinase (398 aa).

Residues 21 to 23 (DFN), Arg36, 59 to 62 (HLGR), Arg119, and Arg157 each bind substrate. Residues Lys208, Gly296, Glu327, and 354–357 (GGDS) each bind ATP.

The protein belongs to the phosphoglycerate kinase family. In terms of assembly, monomer.

It localises to the cytoplasm. The catalysed reaction is (2R)-3-phosphoglycerate + ATP = (2R)-3-phospho-glyceroyl phosphate + ADP. It participates in carbohydrate degradation; glycolysis; pyruvate from D-glyceraldehyde 3-phosphate: step 2/5. In Lactococcus lactis subsp. lactis (strain IL1403) (Streptococcus lactis), this protein is Phosphoglycerate kinase (pgk).